A 353-amino-acid polypeptide reads, in one-letter code: Photosystem II protein D1 (353 aa).

T2 carries the N-acetylthreonine modification. A Phosphothreonine modification is found at T2. A run of 3 helical transmembrane segments spans residues Y29–S46, H118–L133, and W142–A156. H118 is a binding site for chlorophyll a. Y126 serves as a coordination point for pheophytin a. [CaMn4O5] cluster contacts are provided by D170 and E189. A helical transmembrane segment spans residues F197–L218. Chlorophyll a is bound at residue H198. Residues H215 and S264–F265 each bind a quinone. Position 215 (H215) interacts with Fe cation. H272 contacts Fe cation. Residues F274–L288 form a helical membrane-spanning segment. [CaMn4O5] cluster contacts are provided by H332, E333, D342, and A344. A propeptide spanning residues A345–G353 is cleaved from the precursor.

Belongs to the reaction center PufL/M/PsbA/D family. PSII is composed of 1 copy each of membrane proteins PsbA, PsbB, PsbC, PsbD, PsbE, PsbF, PsbH, PsbI, PsbJ, PsbK, PsbL, PsbM, PsbT, PsbX, PsbY, PsbZ, Psb30/Ycf12, at least 3 peripheral proteins of the oxygen-evolving complex and a large number of cofactors. It forms dimeric complexes. The cofactor is The D1/D2 heterodimer binds P680, chlorophylls that are the primary electron donor of PSII, and subsequent electron acceptors. It shares a non-heme iron and each subunit binds pheophytin, quinone, additional chlorophylls, carotenoids and lipids. D1 provides most of the ligands for the Mn4-Ca-O5 cluster of the oxygen-evolving complex (OEC). There is also a Cl(-1) ion associated with D1 and D2, which is required for oxygen evolution. The PSII complex binds additional chlorophylls, carotenoids and specific lipids.. Tyr-161 forms a radical intermediate that is referred to as redox-active TyrZ, YZ or Y-Z. Post-translationally, C-terminally processed by CTPA; processing is essential to allow assembly of the oxygen-evolving complex and thus photosynthetic growth.

The protein resides in the plastid. Its subcellular location is the chloroplast thylakoid membrane. The enzyme catalyses 2 a plastoquinone + 4 hnu + 2 H2O = 2 a plastoquinol + O2. Photosystem II (PSII) is a light-driven water:plastoquinone oxidoreductase that uses light energy to abstract electrons from H(2)O, generating O(2) and a proton gradient subsequently used for ATP formation. It consists of a core antenna complex that captures photons, and an electron transfer chain that converts photonic excitation into a charge separation. The D1/D2 (PsbA/PsbD) reaction center heterodimer binds P680, the primary electron donor of PSII as well as several subsequent electron acceptors. The sequence is that of Photosystem II protein D1 from Panax ginseng (Korean ginseng).